Here is a 106-residue protein sequence, read N- to C-terminus: Probable insulin-like peptide beta-type 1 (106 aa).

The signal sequence occupies residues 1–19; it reads MFSFFTYFLLSALLLSASC. The propeptide at 20–51 is removed; by convertase egl-3; it reads RQPSMDTSKADRILREIEMETELENQLSRARR. Cystine bridges form between Cys-60–Cys-89, Cys-72–Cys-102, Cys-76–Cys-103, and Cys-88–Cys-93.

It belongs to the insulin family. Expressed by ASI and ASJ sensory neurons and weakly by ventral cord motor neurons.

It is found in the secreted. Functionally, probable insulin-like peptide which negatively regulates synapse development at the neuromuscular junctions. Probably acts as a daf-2/InsR agonist ligand to prevent dauer formation under optimal environmental conditions. This Caenorhabditis elegans protein is Probable insulin-like peptide beta-type 1 (ins-4).